Reading from the N-terminus, the 349-residue chain is Increased DNA methylation 2 (349 aa).

The interval 210 to 230 (EDNAGTCTSGEESDVAAKPEV) is disordered. One can recognise a sHSP domain in the interval 233 to 349 (EAHGGLMVGL…VMKNLQKQTV (117 aa)).

The protein belongs to the small heat shock protein (HSP20) family. Homodimer or oligomer. May form an 16-mer complex. Interacts with MBD7 (via C-terminus). Interacts with IDM1 (via N-terminus). Interacts with IMD3. Part of a complex made of MBD7, IDM1, IDM2, IDM3 and ROS1. Expressed in cotyledons and hypocotyls in young seedlings.

It is found in the nucleus. The protein localises to the nucleoplasm. Prevents DNA hypermethylation and transcriptional silencing of transgenes and of some endogenous genes. May act as a molecular chaperone of IDM1, regulating its H3K18 acetylation activity. In Arabidopsis thaliana (Mouse-ear cress), this protein is Increased DNA methylation 2.